The following is a 141-amino-acid chain: Large ribosomal subunit protein bL17 (141 aa).

Belongs to the bacterial ribosomal protein bL17 family. As to quaternary structure, part of the 50S ribosomal subunit. Contacts protein L32.

The chain is Large ribosomal subunit protein bL17 from Agrobacterium fabrum (strain C58 / ATCC 33970) (Agrobacterium tumefaciens (strain C58)).